A 782-amino-acid polypeptide reads, in one-letter code: E3 ubiquitin-protein ligase SopA (782 aa).

Residues 136 to 171 (GVSVSANNRPTVSEGRTPPVSPSLSLQATSSPSSPA) are disordered. Residues 157–171 (PSLSLQATSSPSSPA) show a composition bias toward low complexity. Residue C753 is the Glycyl thioester intermediate of the active site.

Belongs to the SopA E3 ligase family. In terms of processing, ubiquitinated in the presence of host E1 ubiquitin-activating enzyme, E2 ubiquitin-conjugating enzyme and ubiquitin.

The protein localises to the secreted. Its subcellular location is the host cell. The enzyme catalyses S-ubiquitinyl-[E2 ubiquitin-conjugating enzyme]-L-cysteine + [acceptor protein]-L-lysine = [E2 ubiquitin-conjugating enzyme]-L-cysteine + N(6)-ubiquitinyl-[acceptor protein]-L-lysine.. In terms of biological role, effector proteins function to alter host cell physiology and promote bacterial survival in host tissues. This protein is an E3 ubiquitin ligase that interferes with host's ubiquitination pathway. For instance, prevents host innate immune response by ubiquitinating and thus sending to degradation host E3 ubiquitin ligases TRIM56 and TRIM65. In Salmonella typhimurium (strain D23580), this protein is E3 ubiquitin-protein ligase SopA (sopA).